A 150-amino-acid chain; its full sequence is Globin-3 (150 aa).

One can recognise a Globin domain in the interval 11–150; that stretch reads PLTAADKTKI…IICILLNSAY (140 aa). Heme b is bound by residues H74 and H106.

This sequence belongs to the globin family. In terms of assembly, monomer.

The sequence is that of Globin-3 from Mordacia mordax (Southern hemisphere lamprey).